A 1402-amino-acid polypeptide reads, in one-letter code: DNA-directed RNA polymerase subunit beta' (1402 aa).

The Zn(2+) site is built by Cys-71, Cys-73, Cys-86, and Cys-89. Positions 462, 464, and 466 each coordinate Mg(2+). Residues Cys-811, Cys-885, Cys-892, and Cys-895 each coordinate Zn(2+).

It belongs to the RNA polymerase beta' chain family. In terms of assembly, the RNAP catalytic core consists of 2 alpha, 1 beta, 1 beta' and 1 omega subunit. When a sigma factor is associated with the core the holoenzyme is formed, which can initiate transcription. It depends on Mg(2+) as a cofactor. Zn(2+) serves as cofactor.

The catalysed reaction is RNA(n) + a ribonucleoside 5'-triphosphate = RNA(n+1) + diphosphate. In terms of biological role, DNA-dependent RNA polymerase catalyzes the transcription of DNA into RNA using the four ribonucleoside triphosphates as substrates. The chain is DNA-directed RNA polymerase subunit beta' from Bartonella henselae (strain ATCC 49882 / DSM 28221 / CCUG 30454 / Houston 1) (Rochalimaea henselae).